A 238-amino-acid polypeptide reads, in one-letter code: Ribosomal RNA small subunit methyltransferase G (238 aa).

Residues Gly-77, Phe-82, 128–129 (AE), and Arg-147 each bind S-adenosyl-L-methionine. The interval 219–238 (RQTPKKYPRKAGLPNKEPIE) is disordered.

It belongs to the methyltransferase superfamily. RNA methyltransferase RsmG family.

It localises to the cytoplasm. Specifically methylates the N7 position of guanine in position 535 of 16S rRNA. The sequence is that of Ribosomal RNA small subunit methyltransferase G from Oceanobacillus iheyensis (strain DSM 14371 / CIP 107618 / JCM 11309 / KCTC 3954 / HTE831).